The chain runs to 454 residues: LETM1 domain-containing protein YLH47, mitochondrial (454 aa).

A mitochondrion-targeting transit peptide spans 1-45 (MLKYRSLPIKRAIHHPAPGITPISPRIMVSRLRVIPSFNLKFNRW). Residues 46–136 (NSSVPESSKK…LKRTTQDIVR (91 aa)) lie on the Mitochondrial intermembrane side of the membrane. The segment at 51–73 (ESSKKELKTTDGNQESASKVSPV) is disordered. A helical transmembrane segment spans residues 137–157 (LVPFAAFLIIPFAELLLPFAL). Over 158 to 454 (KLFPNLLPST…IGEAAAIKEK (297 aa)) the chain is Mitochondrial matrix. Residues 177–371 (KLENLRNTRK…LCDVLIGIPD (195 aa)) form the Letm1 RBD domain. Residues 376–423 (EVKVNVVKEDEASAKQKLKQLREQEEIMKEEEQQEENAIVSVKDELSL) adopt a coiled-coil conformation. 2 stretches are compositionally biased toward basic and acidic residues: residues 420-430 (ELSLDDQDKNI) and 437-454 (VKPH…IKEK). The interval 420–454 (ELSLDDQDKNIDAAAPDVKPHDTKPIGEAAAIKEK) is disordered.

Associates with the mitochondrial ribosomes.

It is found in the mitochondrion inner membrane. Its function is as follows. Involved in mitochondrial potassium homeostasis through the mitochondrial K(+)/H(+) exchange regulation. The chain is LETM1 domain-containing protein YLH47, mitochondrial (YLH47) from Saccharomyces cerevisiae (strain ATCC 204508 / S288c) (Baker's yeast).